Reading from the N-terminus, the 558-residue chain is Atlastin-1 (558 aa).

Positions 1–27 (MAKNRRDRNSWGGFSEKTYEWSSEEEE) are disordered. The N-terminal hypervariable region (HVR) stretch occupies residues 1–34 (MAKNRRDRNSWGGFSEKTYEWSSEEEEPVKKAGP). The Cytoplasmic segment spans residues 1 to 449 (MAKNRRDRNS…NIFHAARTPA (449 aa)). A phosphoserine mark is found at serine 10, serine 22, and serine 23. Positions 64-309 (DKEVVAVSVA…LIPWLLSPES (246 aa)) constitute a GB1/RHD3-type G domain. Residues arginine 77, lysine 78, glycine 79, lysine 80, serine 81, phenylalanine 82, glutamine 148, arginine 217, aspartate 218, valine 276, and asparagine 279 each contribute to the GDP site. Residues arginine 77, lysine 78, glycine 79, lysine 80, serine 81, and phenylalanine 82 each contribute to the GTP site. Serine 81 serves as a coordination point for Mg(2+). 3 residues coordinate GTP: arginine 217, aspartate 218, and valine 276. Residues 347–438 (MLQATAEANN…YIQYIKHNDS (92 aa)) form a 3HB (three-helix bundle) domain region. At lysine 395 the chain carries N6-acetyllysine. Residues 412–439 (EFSRRYLQQLESEIDELYIQYIKHNDSK) are a coiled coil. The tract at residues 439–447 (KNIFHAART) is linker. The chain crosses the membrane as a helical span at residues 450–470 (TLFVVIFITYVIAGVTGFIGL). Aspartate 471 is a topological domain (lumenal). Residues 472 to 492 (IIASLCNMIMGLTLITLCTWA) traverse the membrane as a helical segment. Over 493 to 558 (YIRYSGEYRE…STEQSEKKKM (66 aa)) the chain is Cytoplasmic. The segment at 521–558 (NEALYKLYSAAATHRHLYHQAFPTPKSESTEQSEKKKM) is autoinhibitory domain.

The protein belongs to the TRAFAC class dynamin-like GTPase superfamily. GB1/RHD3 GTPase family. GB1 subfamily. In terms of assembly, monomeric and homodimeric. The homodimer, transiently formed by two molecules on opposing membranes, is the active form mediating ER membrane fusion. Interacts with REEP1, REEP5, RTN3 and RTN4 (via the transmembrane region); these proteins are involved in endoplasmic reticulum tubular network organization. Interacts with ZFYVE27; both proteins are involved in endoplasmic reticulum tubular network organization. Interacts with ARL6IP1; both proteins are involved in endoplasmic reticulum tubular network organization. Interacts with SPAST; the interaction is direct, could recruit SPAST to Golgi membranes. Interacts (via N-terminal region) with MAP4K4 (via CNH regulatory domain). May interact with TMED2. Interacts with CPT1C. In terms of processing, phosphorylated. Phosphorylation, by different kinases, of the N-terminal hypervariable region (HVR) regulates the ATL1-mediated membrane tethering step.

Its subcellular location is the endoplasmic reticulum membrane. It is found in the golgi apparatus membrane. The protein localises to the cell projection. It localises to the axon. It catalyses the reaction GTP + H2O = GDP + phosphate + H(+). Functionally, atlastin-1 (ATL1) is a membrane-anchored GTPase that mediates the GTP-dependent fusion of endoplasmic reticulum (ER) membranes, maintaining the continuous ER network. It facilitates the formation of three-way junctions where ER tubules intersect. Two atlastin-1 on neighboring ER tubules bind GTP and form loose homodimers through the GB1/RHD3-type G domains and 3HB regions. Upon GTP hydrolysis, the 3HB regions tighten, pulling the membranes together to drive their fusion. After fusion, the homodimer disassembles upon release of inorganic phosphate (Pi). Subsequently, GDP dissociates, resetting the monomers to a conformation ready for a new fusion cycle. May also regulate more or less directly Golgi biogenesis. Indirectly regulates axonal development. In Macaca fascicularis (Crab-eating macaque), this protein is Atlastin-1.